The chain runs to 203 residues: Glycerol-3-phosphate acyltransferase (203 aa).

4 consecutive transmembrane segments (helical) span residues 4–24, 80–100, 117–137, and 139–159; these read MAVT…AVLI, PVLL…PLFF, PIGL…AILF, and YSSL…WMIK.

The protein belongs to the PlsY family. As to quaternary structure, probably interacts with PlsX.

The protein localises to the cell inner membrane. The enzyme catalyses an acyl phosphate + sn-glycerol 3-phosphate = a 1-acyl-sn-glycero-3-phosphate + phosphate. It participates in lipid metabolism; phospholipid metabolism. Catalyzes the transfer of an acyl group from acyl-phosphate (acyl-PO(4)) to glycerol-3-phosphate (G3P) to form lysophosphatidic acid (LPA). This enzyme utilizes acyl-phosphate as fatty acyl donor, but not acyl-CoA or acyl-ACP. The protein is Glycerol-3-phosphate acyltransferase of Vibrio vulnificus (strain YJ016).